Here is a 193-residue protein sequence, read N- to C-terminus: Xanthine phosphoribosyltransferase (193 aa).

Xanthine contacts are provided by leucine 20 and threonine 27. 128–132 (ANGQA) contributes to the 5-phospho-alpha-D-ribose 1-diphosphate binding site. Lysine 156 contacts xanthine.

It belongs to the purine/pyrimidine phosphoribosyltransferase family. Xpt subfamily. In terms of assembly, homodimer.

Its subcellular location is the cytoplasm. The catalysed reaction is XMP + diphosphate = xanthine + 5-phospho-alpha-D-ribose 1-diphosphate. The protein operates within purine metabolism; XMP biosynthesis via salvage pathway; XMP from xanthine: step 1/1. In terms of biological role, converts the preformed base xanthine, a product of nucleic acid breakdown, to xanthosine 5'-monophosphate (XMP), so it can be reused for RNA or DNA synthesis. In Streptococcus pyogenes serotype M3 (strain ATCC BAA-595 / MGAS315), this protein is Xanthine phosphoribosyltransferase.